The primary structure comprises 445 residues: Phosphoglucosamine mutase (445 aa).

Catalysis depends on Ser101, which acts as the Phosphoserine intermediate. The Mg(2+) site is built by Ser101, Asp240, Asp242, and Asp244. Phosphoserine is present on Ser101.

This sequence belongs to the phosphohexose mutase family. Mg(2+) is required as a cofactor. Activated by phosphorylation.

It catalyses the reaction alpha-D-glucosamine 1-phosphate = D-glucosamine 6-phosphate. Its function is as follows. Catalyzes the conversion of glucosamine-6-phosphate to glucosamine-1-phosphate. The polypeptide is Phosphoglucosamine mutase (Pseudomonas aeruginosa (strain UCBPP-PA14)).